We begin with the raw amino-acid sequence, 140 residues long: Cysteine desulfuration protein SufE (140 aa).

Residue C51 is the Cysteine persulfide intermediate of the active site.

Belongs to the SufE family. Homodimer. Interacts with SufS.

The protein resides in the cytoplasm. It functions in the pathway cofactor biosynthesis; iron-sulfur cluster biosynthesis. Its function is as follows. Participates in cysteine desulfuration mediated by SufS. Cysteine desulfuration mobilizes sulfur from L-cysteine to yield L-alanine and constitutes an essential step in sulfur metabolism for biosynthesis of a variety of sulfur-containing biomolecules. Functions as a sulfur acceptor for SufS, by mediating the direct transfer of the sulfur atom from the S-sulfanylcysteine of SufS, an intermediate product of cysteine desulfuration process. This chain is Cysteine desulfuration protein SufE, found in Yersinia pseudotuberculosis serotype O:1b (strain IP 31758).